Reading from the N-terminus, the 618-residue chain is uncharacterized protein (618 aa).

Disordered regions lie at residues serine 70–arginine 118, leucine 330–cysteine 352, threonine 456–threonine 552, and isoleucine 587–leucine 618. 2 stretches are compositionally biased toward basic and acidic residues: residues lysine 74–glutamate 84 and arginine 333–proline 343. Low complexity predominate over residues threonine 463 to leucine 481. Composition is skewed to polar residues over residues lysine 485–methionine 516 and serine 609–leucine 618.

This is an uncharacterized protein from Danio rerio (Zebrafish).